The sequence spans 261 residues: Large ribosomal subunit protein uL3 (261 aa).

Residues 138 to 148 (SVSHRSHGSTG) are compositionally biased toward low complexity. 2 disordered regions span residues 138–163 (SVSH…KKMA) and 214–261 (ADAP…GDQA). Gln151 is subject to N5-methylglutamine. The segment covering 227–261 (APTPVEAAADEAAPAEEPAVTEAPAAEATEAGDQA) has biased composition (low complexity).

Belongs to the universal ribosomal protein uL3 family. Part of the 50S ribosomal subunit. Forms a cluster with proteins L14 and L19. Methylated by PrmB.

In terms of biological role, one of the primary rRNA binding proteins, it binds directly near the 3'-end of the 23S rRNA, where it nucleates assembly of the 50S subunit. This Phenylobacterium zucineum (strain HLK1) protein is Large ribosomal subunit protein uL3.